An 811-amino-acid polypeptide reads, in one-letter code: DNA mismatch repair protein MutS (811 aa).

Position 595 to 602 (595 to 602 (GPNMSGKS)) interacts with ATP.

It belongs to the DNA mismatch repair MutS family.

In terms of biological role, this protein is involved in the repair of mismatches in DNA. It is possible that it carries out the mismatch recognition step. This protein has a weak ATPase activity. The sequence is that of DNA mismatch repair protein MutS from Pseudothermotoga lettingae (strain ATCC BAA-301 / DSM 14385 / NBRC 107922 / TMO) (Thermotoga lettingae).